The sequence spans 331 residues: L-lactate dehydrogenase A chain (331 aa).

NAD(+)-binding positions include 29–57 (GMVG…MEDK) and arginine 98. Arginine 105, asparagine 137, and arginine 168 together coordinate substrate. Residue asparagine 137 coordinates NAD(+). Catalysis depends on histidine 192, which acts as the Proton acceptor. A substrate-binding site is contributed by threonine 247.

The protein belongs to the LDH/MDH superfamily. LDH family. Homotetramer.

It localises to the cytoplasm. It carries out the reaction (S)-lactate + NAD(+) = pyruvate + NADH + H(+). It participates in fermentation; pyruvate fermentation to lactate; (S)-lactate from pyruvate: step 1/1. In terms of biological role, interconverts simultaneously and stereospecifically pyruvate and lactate with concomitant interconversion of NADH and NAD(+). This is L-lactate dehydrogenase A chain (ldha) from Notothenia neglecta (Yellowbelly rockcod).